Here is a 517-residue protein sequence, read N- to C-terminus: Crotonobetaine/carnitine--CoA ligase (517 aa).

Belongs to the ATP-dependent AMP-binding enzyme family.

It carries out the reaction 4-(trimethylamino)butanoate + ATP + CoA = 4-(trimethylamino)butanoyl-CoA + AMP + diphosphate. The enzyme catalyses crotonobetaine + ATP + CoA = crotonobetainyl-CoA + AMP + diphosphate. The catalysed reaction is (R)-carnitine + ATP + CoA = (R)-carnitinyl-CoA + AMP + diphosphate. It participates in amine and polyamine metabolism; carnitine metabolism. Functionally, catalyzes the transfer of CoA to carnitine, generating the initial carnitinyl-CoA needed for the CaiB reaction cycle. Also has activity toward crotonobetaine and gamma-butyrobetaine. This chain is Crotonobetaine/carnitine--CoA ligase, found in Salmonella paratyphi B (strain ATCC BAA-1250 / SPB7).